The sequence spans 273 residues: Formamidopyrimidine-DNA glycosylase (273 aa).

Pro-2 acts as the Schiff-base intermediate with DNA in catalysis. Glu-3 functions as the Proton donor in the catalytic mechanism. Catalysis depends on Lys-57, which acts as the Proton donor; for beta-elimination activity. 3 residues coordinate DNA: His-91, Arg-110, and Lys-151. The FPG-type zinc-finger motif lies at 236–270; it reads QVYGRKDEACNDCGTIIEAKVIGQRNSYFCPHCQM. The Proton donor; for delta-elimination activity role is filled by Arg-260.

Belongs to the FPG family. As to quaternary structure, monomer. Zn(2+) serves as cofactor.

The catalysed reaction is Hydrolysis of DNA containing ring-opened 7-methylguanine residues, releasing 2,6-diamino-4-hydroxy-5-(N-methyl)formamidopyrimidine.. It carries out the reaction 2'-deoxyribonucleotide-(2'-deoxyribose 5'-phosphate)-2'-deoxyribonucleotide-DNA = a 3'-end 2'-deoxyribonucleotide-(2,3-dehydro-2,3-deoxyribose 5'-phosphate)-DNA + a 5'-end 5'-phospho-2'-deoxyribonucleoside-DNA + H(+). Involved in base excision repair of DNA damaged by oxidation or by mutagenic agents. Acts as a DNA glycosylase that recognizes and removes damaged bases. Has a preference for oxidized purines, such as 7,8-dihydro-8-oxoguanine (8-oxoG). Has AP (apurinic/apyrimidinic) lyase activity and introduces nicks in the DNA strand. Cleaves the DNA backbone by beta-delta elimination to generate a single-strand break at the site of the removed base with both 3'- and 5'-phosphates. The sequence is that of Formamidopyrimidine-DNA glycosylase from Actinobacillus pleuropneumoniae serotype 3 (strain JL03).